A 434-amino-acid chain; its full sequence is Methylenetetrahydrofolate--tRNA-(uracil-5-)-methyltransferase TrmFO (434 aa).

An FAD-binding site is contributed by 10–15 (GAGLAG).

It belongs to the MnmG family. TrmFO subfamily. FAD serves as cofactor.

Its subcellular location is the cytoplasm. It catalyses the reaction uridine(54) in tRNA + (6R)-5,10-methylene-5,6,7,8-tetrahydrofolate + NADH + H(+) = 5-methyluridine(54) in tRNA + (6S)-5,6,7,8-tetrahydrofolate + NAD(+). The enzyme catalyses uridine(54) in tRNA + (6R)-5,10-methylene-5,6,7,8-tetrahydrofolate + NADPH + H(+) = 5-methyluridine(54) in tRNA + (6S)-5,6,7,8-tetrahydrofolate + NADP(+). In terms of biological role, catalyzes the folate-dependent formation of 5-methyl-uridine at position 54 (M-5-U54) in all tRNAs. The chain is Methylenetetrahydrofolate--tRNA-(uracil-5-)-methyltransferase TrmFO from Bacillus cereus (strain AH820).